The chain runs to 450 residues: Nicotinamide phosphoribosyltransferase (450 aa).

Arg-210 lines the diphosphate pocket. Asp-233 contributes to the beta-nicotinamide D-ribonucleotide binding site. The diphosphate site is built by His-249 and Arg-310. Beta-nicotinamide D-ribonucleotide contacts are provided by residues 310–312, 364–365, and Arg-403; these read RAD and GD.

It belongs to the NAPRTase family.

It catalyses the reaction beta-nicotinamide D-ribonucleotide + diphosphate = 5-phospho-alpha-D-ribose 1-diphosphate + nicotinamide + H(+). It participates in cofactor biosynthesis; NAD(+) biosynthesis; nicotinamide D-ribonucleotide from 5-phospho-alpha-D-ribose 1-diphosphate and nicotinamide: step 1/1. Functionally, catalyzes the condensation of nicotinamide with 5-phosphoribosyl-1-pyrophosphate to yield nicotinamide mononucleotide, an intermediate in the biosynthesis of NAD. The chain is Nicotinamide phosphoribosyltransferase from Mycoplasma genitalium (strain ATCC 33530 / DSM 19775 / NCTC 10195 / G37) (Mycoplasmoides genitalium).